The chain runs to 503 residues: Lysine--tRNA ligase (503 aa).

The Mg(2+) site is built by glutamate 413 and glutamate 420.

It belongs to the class-II aminoacyl-tRNA synthetase family. In terms of assembly, homodimer. Mg(2+) serves as cofactor.

The protein resides in the cytoplasm. It catalyses the reaction tRNA(Lys) + L-lysine + ATP = L-lysyl-tRNA(Lys) + AMP + diphosphate. This is Lysine--tRNA ligase from Actinobacillus succinogenes (strain ATCC 55618 / DSM 22257 / CCUG 43843 / 130Z).